Reading from the N-terminus, the 339-residue chain is DNA-directed RNA polymerase subunit alpha (339 aa).

An alpha N-terminal domain (alpha-NTD) region spans residues 1 to 238 (MVDPIVTKNW…EQLSIFINFD (238 aa)). The interval 250–339 (VEEQKLNENL…KAAPQGAPKV (90 aa)) is alpha C-terminal domain (alpha-CTD).

It belongs to the RNA polymerase alpha chain family. In terms of assembly, homodimer. The RNAP catalytic core consists of 2 alpha, 1 beta, 1 beta' and 1 omega subunit. When a sigma factor is associated with the core the holoenzyme is formed, which can initiate transcription.

The catalysed reaction is RNA(n) + a ribonucleoside 5'-triphosphate = RNA(n+1) + diphosphate. DNA-dependent RNA polymerase catalyzes the transcription of DNA into RNA using the four ribonucleoside triphosphates as substrates. The sequence is that of DNA-directed RNA polymerase subunit alpha from Anaeromyxobacter dehalogenans (strain 2CP-C).